The sequence spans 61 residues: Small ribosomal subunit protein uS14B (61 aa).

Residues cysteine 24, cysteine 27, cysteine 40, and cysteine 43 each coordinate Zn(2+).

It belongs to the universal ribosomal protein uS14 family. Zinc-binding uS14 subfamily. In terms of assembly, part of the 30S ribosomal subunit. Contacts proteins S3 and S10. Requires Zn(2+) as cofactor.

Functionally, binds 16S rRNA, required for the assembly of 30S particles and may also be responsible for determining the conformation of the 16S rRNA at the A site. The protein is Small ribosomal subunit protein uS14B of Shouchella clausii (strain KSM-K16) (Alkalihalobacillus clausii).